The primary structure comprises 199 residues: Fe/S biogenesis protein NfuA (199 aa).

Cys151 and Cys154 together coordinate [4Fe-4S] cluster.

Belongs to the NfuA family. Homodimer. [4Fe-4S] cluster serves as cofactor.

In terms of biological role, involved in iron-sulfur cluster biogenesis. Binds a 4Fe-4S cluster, can transfer this cluster to apoproteins, and thereby intervenes in the maturation of Fe/S proteins. Could also act as a scaffold/chaperone for damaged Fe/S proteins. The sequence is that of Fe/S biogenesis protein NfuA from Stenotrophomonas maltophilia (strain K279a).